The chain runs to 348 residues: Phospho-2-dehydro-3-deoxyheptonate aldolase, Trp-sensitive (348 aa).

It belongs to the class-I DAHP synthase family.

The catalysed reaction is D-erythrose 4-phosphate + phosphoenolpyruvate + H2O = 7-phospho-2-dehydro-3-deoxy-D-arabino-heptonate + phosphate. Its pathway is metabolic intermediate biosynthesis; chorismate biosynthesis; chorismate from D-erythrose 4-phosphate and phosphoenolpyruvate: step 1/7. Its function is as follows. Stereospecific condensation of phosphoenolpyruvate (PEP) and D-erythrose-4-phosphate (E4P) giving rise to 3-deoxy-D-arabino-heptulosonate-7-phosphate (DAHP). This is Phospho-2-dehydro-3-deoxyheptonate aldolase, Trp-sensitive (aroH) from Escherichia coli (strain K12).